A 448-amino-acid polypeptide reads, in one-letter code: NADP-specific glutamate dehydrogenase (448 aa).

3 residues coordinate substrate: lysine 88, glutamine 109, and lysine 112. Lysine 124 acts as the Proton donor in catalysis. Position 163 (glycine 163) interacts with substrate. NADP(+) is bound by residues threonine 207 and asparagine 238. A substrate-binding site is contributed by serine 375.

The protein belongs to the Glu/Leu/Phe/Val dehydrogenases family. As to quaternary structure, homohexamer.

It carries out the reaction L-glutamate + NADP(+) + H2O = 2-oxoglutarate + NH4(+) + NADPH + H(+). In terms of biological role, catalyzes the reversible oxidative deamination of glutamate to alpha-ketoglutarate and ammonia. The chain is NADP-specific glutamate dehydrogenase (gdhA) from Psychrobacter sp. (strain TAD1).